Here is a 359-residue protein sequence, read N- to C-terminus: MDLNTILIILGILALVALVAHGLWSNRREKSQYFENANTFGRANRQDEPISTPESYKQARNVAPAFTQPKQAVIHQEPPVQQPLNTEPEPITQETPVRAEPQSVDQIKITLPNVEPAPAESAPIYEMRPSRRNTEPQYYQQPSEPYYQQPVQQNLARQTIADIEATVDPNEGVNSSSEYLRTQLQEASQEGNQIFTQSPLSRAPLQQPIEFDQPAQQEKESDNNEDEDVSFVMLYVAAAENRQFQGTVLVQALEDLGFSLGEDNLYHRHLDLTVASPVLFSAANITQPGTFNPYTLHEFFTDGVAIFMRLPSPGNDRTNLKIMIRSAKTLAQQLGGFVLTEQQELFTDAAEEEYLAKIK.

The Periplasmic portion of the chain corresponds to M1–N4. The chain crosses the membrane as a helical span at residues T5 to S25. Topologically, residues N26–K359 are cytoplasmic. The interval P78 to P101 is disordered.

This sequence belongs to the ZipA family. In terms of assembly, interacts with FtsZ via their C-terminal domains.

Its subcellular location is the cell inner membrane. In terms of biological role, essential cell division protein that stabilizes the FtsZ protofilaments by cross-linking them and that serves as a cytoplasmic membrane anchor for the Z ring. Also required for the recruitment to the septal ring of downstream cell division proteins. The protein is Cell division protein ZipA of Mannheimia succiniciproducens (strain KCTC 0769BP / MBEL55E).